We begin with the raw amino-acid sequence, 457 residues long: Aromatic amino acid transport protein AroP (457 aa).

The Cytoplasmic segment spans residues 1–18; that stretch reads MMEGQQHGEQLKRGLKNR. Residues 19 to 39 form a helical membrane-spanning segment; it reads HIQLIALGGAIGTGLFLGSAS. The Periplasmic segment spans residues 40–42; it reads VIQ. Residues 43 to 63 traverse the membrane as a helical segment; it reads SAGPGIILGYAIAGFIAFLIM. The Cytoplasmic segment spans residues 64–98; it reads RQLGEMVVEEPVAGSFSHFAYKYWGSFAGFASGWN. Residues 99 to 119 form a helical membrane-spanning segment; the sequence is YWVLYVLVAMAELTAVGKYIQ. Residues 120–124 lie on the Periplasmic side of the membrane; that stretch reads FWYPE. The helical transmembrane segment at 125–145 threads the bilayer; that stretch reads IPTWVSAAVFFVVINAINLTN. The Cytoplasmic segment spans residues 146–147; the sequence is VK. Residues 148–168 traverse the membrane as a helical segment; sequence VFGEMEFWFAIIKVIAVVAMI. Residues 169–192 lie on the Periplasmic side of the membrane; that stretch reads IFGGWLLFSGNGGPQATVSNLWDQ. A helical membrane pass occupies residues 193–213; that stretch reads GGFLPHGFTGLVMMMAIIMFS. Residues 214-239 are Cytoplasmic-facing; that stretch reads FGGLELVGITAAEADNPEQSIPKATN. The helical transmembrane segment at 240 to 260 threads the bilayer; the sequence is QVIYRILIFYIGSLAVLLSLM. Residues 261-279 lie on the Periplasmic side of the membrane; sequence PWTRVTADTSPFVLIFHEL. A helical transmembrane segment spans residues 280 to 300; it reads GDTFVANALNIVVLTAALSVY. The Cytoplasmic portion of the chain corresponds to 301 to 330; the sequence is NSCVYCNSRMLFGLAQQGNAPKALASVDKR. A helical transmembrane segment spans residues 331-351; that stretch reads GVPVNTILVSALVTALCVLIN. The Periplasmic segment spans residues 352-359; sequence YLAPESAF. The chain crosses the membrane as a helical span at residues 360–380; it reads GLLMALVVSALVINWAMISLA. The Cytoplasmic portion of the chain corresponds to 381-402; sequence HMKFRRAKQEQGVVTRFPALLY. Residues 403 to 423 traverse the membrane as a helical segment; that stretch reads PLGNWICLLFMAAVLVIMLMT. The Periplasmic portion of the chain corresponds to 424–426; the sequence is PGM. The helical transmembrane segment at 427 to 447 threads the bilayer; it reads AISVYLIPVWLIVLGIGYLFK. At 448 to 457 the chain is on the cytoplasmic side; the sequence is EKTAKAVKAH.

Belongs to the amino acid-polyamine-organocation (APC) superfamily. Amino acid transporter (AAT) (TC 2.A.3.1) family.

It localises to the cell inner membrane. It carries out the reaction L-phenylalanine(in) + H(+)(in) = L-phenylalanine(out) + H(+)(out). The enzyme catalyses L-tryptophan(in) + H(+)(in) = L-tryptophan(out) + H(+)(out). The catalysed reaction is L-tyrosine(in) + H(+)(in) = L-tyrosine(out) + H(+)(out). With respect to regulation, strong, mutual inhibition of uptake by tyrosine, phenylalanine, and tryptophan. Transport is also inhibited by the aromatic analogs p-fluorophenylalanine, beta-2-thienylalanine and 5-methyltryptophan. In terms of biological role, permease that is involved in the active transport across the cytoplasmic membrane of all three aromatic amino acids, phenylalanine, tyrosine and tryptophan. The sequence is that of Aromatic amino acid transport protein AroP from Escherichia coli (strain K12).